The sequence spans 292 residues: UPF0749 protein Mb1856 (292 aa).

Positions Met-1–Ala-28 are cleaved as a signal peptide. Positions Met-1–Asp-30 are disordered. Transmembrane regions (helical) follow at residues Val-68 to Val-88, Ala-152 to Ile-172, and Val-229 to Met-249.

This sequence belongs to the UPF0749 family.

Its subcellular location is the cell membrane. The sequence is that of UPF0749 protein Mb1856 from Mycobacterium bovis (strain ATCC BAA-935 / AF2122/97).